We begin with the raw amino-acid sequence, 158 residues long: Transcription elongation factor GreA (158 aa).

Residues 45-73 are a coiled coil; the sequence is AEYHAAREQQSFIEGRIKQLESELSHAEI.

The protein belongs to the GreA/GreB family.

Necessary for efficient RNA polymerase transcription elongation past template-encoded arresting sites. The arresting sites in DNA have the property of trapping a certain fraction of elongating RNA polymerases that pass through, resulting in locked ternary complexes. Cleavage of the nascent transcript by cleavage factors such as GreA or GreB allows the resumption of elongation from the new 3'terminus. GreA releases sequences of 2 to 3 nucleotides. The protein is Transcription elongation factor GreA of Xanthomonas axonopodis pv. citri (strain 306).